We begin with the raw amino-acid sequence, 82 residues long: Delta-ctenitoxin-Pn2c (82 aa).

An N-terminal signal peptide occupies residues 1-17 (MKVAILFLSILVLAVAS). The propeptide occupies 18 to 34 (ESIEESRDDFAVEELGR). 5 disulfide bridges follow: Cys-37–Cys-51, Cys-44–Cys-57, Cys-48–Cys-80, Cys-50–Cys-65, and Cys-59–Cys-63.

As to expression, expressed by the venom gland.

The protein localises to the secreted. In terms of biological role, reversible inhibitor of voltage-gated sodium channels (Nav). Delays the fast inactivation kinetics of neuronal-type sodium channels. In vivo, it induces rat penile erection. This effect may be due to the neuronal nitric oxide synthase (NOS1), since one of its selective inhibitor completely abolishes all the toxic effects of the toxin. This toxin also causes scratching, lacrimation, hypersalivation, sweating and agitation followed by spastic paralysis of the anterior and posterior extremities and death at dose levels of 0.24 mg/mouse. It is also insecticidal to the larval and adult forms of the house fly. In Phoneutria nigriventer (Brazilian armed spider), this protein is Delta-ctenitoxin-Pn2c.